The following is a 403-amino-acid chain: MSEKGRLFTSESVTEGHPDKICDAISDSVLDALLAADPRSRVAVETLVTTGQVHVVGEVATSAKEAFADITNTVRARILEIGYDSSDKGFDGATCGVNIGIGAQSPDIAQGVDTAHEARVEGAADPLDSQGAGDQGLMFGYAINATPELMPLPIALAHRLSRRLTEVRKNGVLPYLRPDGKTQVTIAYEDNVPVRLDTVVISTQHAADIDLEKTLDPDIREKVLNTVLDDLAHETLDASTVRVLVNPTGKFVLGGPMGDAGLTGRKIIVDTYGGWARHGGGAFSGKDPSKVDRSAAYAMRWVAKNVVAAGLAERVEVQVAYAIGKAAPVGLFVETFGTETEDPVKIEKAIGEVFDLRPGAIIRDLNLLRPIYAPTAAYGHFGRTDVELPWEQLDKVDDLKRAI.

His-17 serves as a coordination point for ATP. Asp-19 contributes to the Mg(2+) binding site. Residue Glu-45 coordinates K(+). L-methionine-binding residues include Glu-58 and Gln-104. Positions 104-114 (QSPDIAQGVDT) are flexible loop. Residues 179-181 (DGK), 250-251 (KF), Asp-259, 265-266 (RK), Ala-282, and Lys-286 contribute to the ATP site. Position 259 (Asp-259) interacts with L-methionine. L-methionine is bound at residue Lys-290.

This sequence belongs to the AdoMet synthase family. Homotetramer; dimer of dimers. It depends on Mg(2+) as a cofactor. Requires K(+) as cofactor.

It localises to the cytoplasm. The catalysed reaction is L-methionine + ATP + H2O = S-adenosyl-L-methionine + phosphate + diphosphate. It functions in the pathway amino-acid biosynthesis; S-adenosyl-L-methionine biosynthesis; S-adenosyl-L-methionine from L-methionine: step 1/1. In terms of biological role, catalyzes the formation of S-adenosylmethionine (AdoMet) from methionine and ATP. The overall synthetic reaction is composed of two sequential steps, AdoMet formation and the subsequent tripolyphosphate hydrolysis which occurs prior to release of AdoMet from the enzyme. The chain is S-adenosylmethionine synthase from Mycobacterium bovis (strain ATCC BAA-935 / AF2122/97).